Here is a 279-residue protein sequence, read N- to C-terminus: MAKNNNIVIVFDFDKTIIDVDSDNWVVDELGFTDLFNQLLPTMPWNSLMNRMMKELHDHGKTIEEIKQVLRRIPIHPRVIPAIKSAHALGCELRIVSDANTLFIETIIEHLGIGEFFSEINTNPGLVDEQGRLIVSPYHDFTKSSHGCSRCPPNMCKGLIIDRIQASLTKEGKTSKMIYLGDGAGDYCPSLGLKAEDYMMPRKNFPVWDLISQNPMLVKATVRDWTDGEDMERILMEIINEIMSSEEGEENDKMLSSENCKISVGIVHEPIQVPLNLVK.

The active-site Nucleophile is aspartate 12. Mg(2+) is bound by residues aspartate 12 and aspartate 14. Aspartate 14 (proton donor) is an active-site residue. Residues aspartate 23 and aspartate 98 each contribute to the substrate site. Aspartate 182 contacts Mg(2+).

The protein belongs to the HAD-like hydrolase superfamily. In terms of assembly, tetramer. Mg(2+) is required as a cofactor.

It carries out the reaction diphosphate + H2O = 2 phosphate + H(+). In terms of biological role, catalyzes the specific cleavage of pyrophosphate. In Arabidopsis thaliana (Mouse-ear cress), this protein is Inorganic pyrophosphatase 2.